Here is a 355-residue protein sequence, read N- to C-terminus: 3-isopropylmalate dehydrogenase (355 aa).

Substrate is bound by residues R90, R100, R128, and D222. Mg(2+) contacts are provided by D222, D246, and D250. 280-292 (GSAPDIAGKGVAN) serves as a coordination point for NAD(+).

It belongs to the isocitrate and isopropylmalate dehydrogenases family. LeuB type 1 subfamily. Homodimer. Mg(2+) serves as cofactor. Mn(2+) is required as a cofactor.

The protein resides in the cytoplasm. The catalysed reaction is (2R,3S)-3-isopropylmalate + NAD(+) = 4-methyl-2-oxopentanoate + CO2 + NADH. Its pathway is amino-acid biosynthesis; L-leucine biosynthesis; L-leucine from 3-methyl-2-oxobutanoate: step 3/4. In terms of biological role, catalyzes the oxidation of 3-carboxy-2-hydroxy-4-methylpentanoate (3-isopropylmalate) to 3-carboxy-4-methyl-2-oxopentanoate. The product decarboxylates to 4-methyl-2 oxopentanoate. The polypeptide is 3-isopropylmalate dehydrogenase (Cupriavidus metallidurans (strain ATCC 43123 / DSM 2839 / NBRC 102507 / CH34) (Ralstonia metallidurans)).